Reading from the N-terminus, the 101-residue chain is Large ribosomal subunit protein uL6m (101 aa).

It belongs to the universal ribosomal protein uL6 family.

Its subcellular location is the mitochondrion. This Marchantia polymorpha (Common liverwort) protein is Large ribosomal subunit protein uL6m (RPL6).